A 260-amino-acid chain; its full sequence is Adenosylcobinamide-GDP ribazoletransferase (260 aa).

Helical transmembrane passes span 42-62 (TWALPVAGLLVGLAGALVYKI), 68-88 (LTPNLAALLALATTALITGAL), 118-137 (IGTYGVCALILSFGLRWSAL), 144-166 (WLVTLALCAAHCAARAGVPAFMS), 180-200 (AGAPPGRSVAIAFAVGTLVLT), 201-221 (LALGPGKALVGLILLSLAGLI), and 237-257 (ILGAFEQTGEIVILLVAAAFQ).

The protein belongs to the CobS family. Mg(2+) serves as cofactor.

Its subcellular location is the cell inner membrane. The catalysed reaction is alpha-ribazole + adenosylcob(III)inamide-GDP = adenosylcob(III)alamin + GMP + H(+). It catalyses the reaction alpha-ribazole 5'-phosphate + adenosylcob(III)inamide-GDP = adenosylcob(III)alamin 5'-phosphate + GMP + H(+). It functions in the pathway cofactor biosynthesis; adenosylcobalamin biosynthesis; adenosylcobalamin from cob(II)yrinate a,c-diamide: step 7/7. Joins adenosylcobinamide-GDP and alpha-ribazole to generate adenosylcobalamin (Ado-cobalamin). Also synthesizes adenosylcobalamin 5'-phosphate from adenosylcobinamide-GDP and alpha-ribazole 5'-phosphate. In Bradyrhizobium diazoefficiens (strain JCM 10833 / BCRC 13528 / IAM 13628 / NBRC 14792 / USDA 110), this protein is Adenosylcobinamide-GDP ribazoletransferase.